Reading from the N-terminus, the 261-residue chain is 1-(5-phosphoribosyl)-5-[(5-phosphoribosylamino)methylideneamino] imidazole-4-carboxamide isomerase (261 aa).

The Proton acceptor role is filled by aspartate 7. The Proton donor role is filled by aspartate 129.

This sequence belongs to the HisA/HisF family.

Its subcellular location is the cytoplasm. The enzyme catalyses 1-(5-phospho-beta-D-ribosyl)-5-[(5-phospho-beta-D-ribosylamino)methylideneamino]imidazole-4-carboxamide = 5-[(5-phospho-1-deoxy-D-ribulos-1-ylimino)methylamino]-1-(5-phospho-beta-D-ribosyl)imidazole-4-carboxamide. The protein operates within amino-acid biosynthesis; L-histidine biosynthesis; L-histidine from 5-phospho-alpha-D-ribose 1-diphosphate: step 4/9. This Colwellia psychrerythraea (strain 34H / ATCC BAA-681) (Vibrio psychroerythus) protein is 1-(5-phosphoribosyl)-5-[(5-phosphoribosylamino)methylideneamino] imidazole-4-carboxamide isomerase.